A 279-amino-acid chain; its full sequence is S-methyl-5'-thioadenosine phosphorylase (279 aa).

Phosphate-binding positions include Ser-13, 55 to 56 (RH), and 88 to 89 (TA). Substrate is bound at residue Met-191. Thr-192 is a phosphate binding site. 215–217 (DYD) is a binding site for substrate.

It belongs to the PNP/MTAP phosphorylase family. MTAP subfamily. As to quaternary structure, homotrimer.

The protein localises to the cytoplasm. It is found in the nucleus. It carries out the reaction S-methyl-5'-thioadenosine + phosphate = 5-(methylsulfanyl)-alpha-D-ribose 1-phosphate + adenine. The protein operates within amino-acid biosynthesis; L-methionine biosynthesis via salvage pathway; S-methyl-5-thio-alpha-D-ribose 1-phosphate from S-methyl-5'-thioadenosine (phosphorylase route): step 1/1. Functionally, catalyzes the reversible phosphorylation of S-methyl-5'-thioadenosine (MTA) to adenine and 5-methylthioribose-1-phosphate. Involved in the breakdown of MTA, a major by-product of polyamine biosynthesis. Responsible for the first step in the methionine salvage pathway after MTA has been generated from S-adenosylmethionine. Has broad substrate specificity with 6-aminopurine nucleosides as preferred substrates. The chain is S-methyl-5'-thioadenosine phosphorylase from Anopheles darlingi (Mosquito).